The primary structure comprises 131 residues: UPF0102 protein YraN (131 aa).

Over residues M1–T19 the composition is skewed to polar residues. A disordered region spans residues M1–G20.

This sequence belongs to the UPF0102 family.

This is UPF0102 protein YraN from Escherichia coli O17:K52:H18 (strain UMN026 / ExPEC).